The following is a 69-amino-acid chain: UPF0150 protein Ta0767 (69 aa).

Belongs to the UPF0150 family.

The polypeptide is UPF0150 protein Ta0767 (Thermoplasma acidophilum (strain ATCC 25905 / DSM 1728 / JCM 9062 / NBRC 15155 / AMRC-C165)).